A 207-amino-acid polypeptide reads, in one-letter code: Holliday junction branch migration complex subunit RuvA (207 aa).

A domain I region spans residues Met-1 to Ser-71. Residues Thr-72–Glu-149 form a domain II region. A flexible linker region spans residues Val-150–Glu-155. Positions Val-156–Lys-207 are domain III.

Belongs to the RuvA family. In terms of assembly, homotetramer. Forms an RuvA(8)-RuvB(12)-Holliday junction (HJ) complex. HJ DNA is sandwiched between 2 RuvA tetramers; dsDNA enters through RuvA and exits via RuvB. An RuvB hexamer assembles on each DNA strand where it exits the tetramer. Each RuvB hexamer is contacted by two RuvA subunits (via domain III) on 2 adjacent RuvB subunits; this complex drives branch migration. In the full resolvosome a probable DNA-RuvA(4)-RuvB(12)-RuvC(2) complex forms which resolves the HJ.

It localises to the cytoplasm. The RuvA-RuvB-RuvC complex processes Holliday junction (HJ) DNA during genetic recombination and DNA repair, while the RuvA-RuvB complex plays an important role in the rescue of blocked DNA replication forks via replication fork reversal (RFR). RuvA specifically binds to HJ cruciform DNA, conferring on it an open structure. The RuvB hexamer acts as an ATP-dependent pump, pulling dsDNA into and through the RuvAB complex. HJ branch migration allows RuvC to scan DNA until it finds its consensus sequence, where it cleaves and resolves the cruciform DNA. The chain is Holliday junction branch migration complex subunit RuvA from Rhodopirellula baltica (strain DSM 10527 / NCIMB 13988 / SH1).